The following is a 364-amino-acid chain: Chorismate synthase (364 aa).

The segment at Met41–Arg60 is disordered. Residues Arg48 and Arg54 each contribute to the NADP(+) site. Residues Arg125 to Ser127, Asn238 to Ala239, Gly278, Lys293 to Ser297, and Arg319 contribute to the FMN site.

This sequence belongs to the chorismate synthase family. In terms of assembly, homotetramer. The cofactor is FMNH2.

It carries out the reaction 5-O-(1-carboxyvinyl)-3-phosphoshikimate = chorismate + phosphate. Its pathway is metabolic intermediate biosynthesis; chorismate biosynthesis; chorismate from D-erythrose 4-phosphate and phosphoenolpyruvate: step 7/7. Its function is as follows. Catalyzes the anti-1,4-elimination of the C-3 phosphate and the C-6 proR hydrogen from 5-enolpyruvylshikimate-3-phosphate (EPSP) to yield chorismate, which is the branch point compound that serves as the starting substrate for the three terminal pathways of aromatic amino acid biosynthesis. This reaction introduces a second double bond into the aromatic ring system. This is Chorismate synthase from Shewanella sp. (strain MR-4).